The primary structure comprises 298 residues: Probable D,D-dipeptide transport system permease protein DdpC (298 aa).

Over 1 to 33 the chain is Cytoplasmic; it reads MMLSEETSAVRPQKQTRFNGAKLVWMLKGSPLT. A helical transmembrane segment spans residues 34–54; it reads VTSAVIIVLMLLMMIFSPWLA. Over 55-96 the chain is Periplasmic; it reads THDPNAIDLTARLLPPSAAHWFGTDEVGRDLFSRVLVGSQQS. Residues 97–117 traverse the membrane as a helical segment; sequence ILAGLVVVAIAGMIGSLLGCL. Residues 97 to 282 enclose the ABC transmembrane type-1 domain; the sequence is ILAGLVVVAI…LTAVGFNLFG (186 aa). The Cytoplasmic portion of the chain corresponds to 118–124; that stretch reads SGVLGGR. A run of 2 helical transmembrane segments spans residues 125-145 and 146-166; these read ADAI…LVLT and MALA…IAIV. Over 167 to 217 the chain is Cytoplasmic; the sequence is RIPFYVRLARGQALVVRQYTYVQAAKTFGASRWHLINWHILRNSLPPLIVQ. The chain crosses the membrane as a helical span at residues 218 to 238; sequence ASLDIGSAILMAATLGFIGLG. Residues 239–260 are Periplasmic-facing; that stretch reads AQQPSAEWGAMVANGRNYVLDQ. A helical membrane pass occupies residues 261–281; that stretch reads WWYCAFPGAAILLTAVGFNLF. The Cytoplasmic segment spans residues 282 to 298; it reads GDGIRDLLDPKAGGKQS.

Belongs to the binding-protein-dependent transport system permease family. OppBC subfamily. In terms of assembly, the complex is composed of two ATP-binding proteins (DdpD and DdpF), two transmembrane proteins (DdpB and DdpC) and a solute-binding protein (DdpA).

Its subcellular location is the cell inner membrane. Functionally, part of the ABC transporter complex DdpABCDF, which is probably involved in D,D-dipeptide transport. Probably responsible for the translocation of the substrate across the membrane. The polypeptide is Probable D,D-dipeptide transport system permease protein DdpC (ddpC) (Escherichia coli (strain K12)).